The sequence spans 623 residues: uncharacterized protein (623 aa).

A coiled-coil region spans residues 24 to 51 (RALVQKDELAQASQDVEDMRDCYDSLLN). Disordered stretches follow at residues 148–170 (TRQREKGRSKGGKGETFSPQQLQ), 240–343 (FSGL…TTPP), 362–393 (ALPTPVETTRSPSSTTSPGHKNVGSSNPTKAI), 454–531 (SFSG…LGYS), and 585–607 (KKLGTPSPPLTPMSLIHPPPQAL). A compositionally biased stretch (acidic residues) spans 243–259 (LEDDDGDDEIENNENDG). The span at 328 to 343 (VSQSAPLFPENRTTPP) shows a compositional bias: polar residues. Positions 364-379 (PTPVETTRSPSSTTSP) are enriched in low complexity. Residues 384-393 (VGSSNPTKAI) show a composition bias toward polar residues. The span at 484–495 (PVSKLPKVSSSP) shows a compositional bias: low complexity. Residues 496–506 (TASPTFVSTPK) show a composition bias toward polar residues. Residues 590–606 (PSPPLTPMSLIHPPPQA) are compositionally biased toward pro residues.

This is an uncharacterized protein from Arabidopsis thaliana (Mouse-ear cress).